Consider the following 405-residue polypeptide: Glyceraldehyde-3-phosphate dehydrogenase A, chloroplastic (405 aa).

Residues M1 to A68 constitute a chloroplast transit peptide. Residues R80–I81, D104, and R149 each bind NADP(+). Residues S221 to T223, T252, R267, T280 to G281, and R303 contribute to the D-glyceraldehyde 3-phosphate site. C222 serves as the catalytic Nucleophile. N385 is an NADP(+) binding site.

The protein belongs to the glyceraldehyde-3-phosphate dehydrogenase family. As to quaternary structure, tetramer of either four A chains (GAPDH 2) or two A and two B chains (GAPDH 1).

Its subcellular location is the plastid. The protein resides in the chloroplast. The enzyme catalyses D-glyceraldehyde 3-phosphate + phosphate + NADP(+) = (2R)-3-phospho-glyceroyl phosphate + NADPH + H(+). It participates in carbohydrate biosynthesis; Calvin cycle. In Pisum sativum (Garden pea), this protein is Glyceraldehyde-3-phosphate dehydrogenase A, chloroplastic (GAPA).